The primary structure comprises 368 residues: Peptide chain release factor 2 (368 aa).

The residue at position 250 (Gln250) is an N5-methylglutamine.

This sequence belongs to the prokaryotic/mitochondrial release factor family. Post-translationally, methylated by PrmC. Methylation increases the termination efficiency of RF2.

The protein localises to the cytoplasm. Peptide chain release factor 2 directs the termination of translation in response to the peptide chain termination codons UGA and UAA. This Rickettsia conorii (strain ATCC VR-613 / Malish 7) protein is Peptide chain release factor 2.